Reading from the N-terminus, the 215-residue chain is 3,4-dihydroxy-2-butanone 4-phosphate synthase (215 aa).

D-ribulose 5-phosphate-binding positions include arginine 38–glutamate 39, aspartate 43, arginine 151–threonine 155, and glutamate 175. Glutamate 39 serves as a coordination point for Mg(2+). Position 154 (histidine 154) interacts with Mg(2+).

The protein belongs to the DHBP synthase family. In terms of assembly, homodimer. It depends on Mg(2+) as a cofactor. Requires Mn(2+) as cofactor.

The catalysed reaction is D-ribulose 5-phosphate = (2S)-2-hydroxy-3-oxobutyl phosphate + formate + H(+). Its pathway is cofactor biosynthesis; riboflavin biosynthesis; 2-hydroxy-3-oxobutyl phosphate from D-ribulose 5-phosphate: step 1/1. In terms of biological role, catalyzes the conversion of D-ribulose 5-phosphate to formate and 3,4-dihydroxy-2-butanone 4-phosphate. This is 3,4-dihydroxy-2-butanone 4-phosphate synthase from Haemophilus influenzae (strain 86-028NP).